We begin with the raw amino-acid sequence, 398 residues long: L-glutamine--4-(methylsulfanyl)-2-oxobutanoate aminotransferase (398 aa).

K240 carries the post-translational modification N6-(pyridoxal phosphate)lysine.

The protein belongs to the class-I pyridoxal-phosphate-dependent aminotransferase family. MtnE subfamily. Pyridoxal 5'-phosphate serves as cofactor.

The catalysed reaction is 4-methylsulfanyl-2-oxobutanoate + L-glutamine = 2-oxoglutaramate + L-methionine. It functions in the pathway amino-acid biosynthesis; L-methionine biosynthesis via salvage pathway; L-methionine from S-methyl-5-thio-alpha-D-ribose 1-phosphate: step 6/6. Involved in the methylthioribose (MTR) recycling pathway. Catalyzes the formation of methionine from 2-keto-4-methylthiobutyrate (KMTB). This chain is L-glutamine--4-(methylsulfanyl)-2-oxobutanoate aminotransferase, found in Bacillus subtilis (strain 168).